The following is a 160-amino-acid chain: Serine-protein kinase RsbW (160 aa).

This sequence belongs to the anti-sigma-factor family.

It catalyses the reaction L-seryl-[protein] + ATP = O-phospho-L-seryl-[protein] + ADP + H(+). It carries out the reaction L-threonyl-[protein] + ATP = O-phospho-L-threonyl-[protein] + ADP + H(+). Negative regulator of sigma-B activity. Phosphorylates and inactivates its specific antagonist protein, RsbV. Upon phosphorylation of RsbV, RsbW is released and binds to sigma-B, thereby blocking its ability to form an RNA polymerase holoenzyme (E-sigma-B). This Bacillus licheniformis protein is Serine-protein kinase RsbW.